The chain runs to 182 residues: T-cell surface glycoprotein CD3 gamma chain (182 aa).

The signal sequence occupies residues methionine 1–alanine 22. Residues glutamine 23–serine 116 are Extracellular-facing. The 58-residue stretch at glutamine 37 to serine 94 folds into the Ig-like domain. Cysteine 46 and cysteine 87 are joined by a disulfide. Asparagine 66 is a glycosylation site (N-linked (GlcNAc...) asparagine). Residues glycine 117–alanine 137 traverse the membrane as a helical segment. Residues glycine 138–lysine 182 lie on the Cytoplasmic side of the membrane. At serine 145 the chain carries Phosphoserine. At serine 148 the chain carries Phosphoserine; by PKC. The ITAM domain occupies aspartate 149–asparagine 177. Positions leucine 153 to leucine 154 match the Di-leucine motif motif.

In terms of assembly, the TCR-CD3 complex is composed of a CD3D/CD3E and a CD3G/CD3E heterodimers that preferentially associate with TCRalpha and TCRbeta, respectively, to form TCRalpha/CD3E/CD3G and TCRbeta/CD3G/CD3E trimers. In turn, the hexamer interacts with CD3Z homodimer to form the TCR-CD3 complex. Alternatively, TCRalpha and TCRbeta can be replaced by TCRgamma and TCRdelta. In terms of processing, phosphorylated on Tyr residues after T-cell receptor triggering by LCK in association with CD4/CD8. Phosphorylated also by PKC; leading to the TCR complex down-regulation. Phosphorylated on Tyr residues after T-cell receptor triggering by LCK in association with CD4/CD8.

It localises to the cell membrane. Part of the TCR-CD3 complex present on T-lymphocyte cell surface that plays an essential role in adaptive immune response. When antigen presenting cells (APCs) activate T-cell receptor (TCR), TCR-mediated signals are transmitted across the cell membrane by the CD3 chains CD3D, CD3E, CD3G and CD3Z. All CD3 chains contain immunoreceptor tyrosine-based activation motifs (ITAMs) in their cytoplasmic domain. Upon TCR engagement, these motifs become phosphorylated by Src family protein tyrosine kinases LCK and FYN, resulting in the activation of downstream signaling pathways. In addition to this role of signal transduction in T-cell activation, CD3G plays an essential role in the dynamic regulation of TCR expression at the cell surface. Indeed, constitutive TCR cycling is dependent on the di-leucine-based (diL) receptor-sorting motif present in CD3G. In Rattus norvegicus (Rat), this protein is T-cell surface glycoprotein CD3 gamma chain (Cd3g).